The following is a 312-amino-acid chain: Methionyl-tRNA formyltransferase (312 aa).

111 to 114 is a binding site for (6S)-5,6,7,8-tetrahydrofolate; that stretch reads SLLP.

This sequence belongs to the Fmt family.

The enzyme catalyses L-methionyl-tRNA(fMet) + (6R)-10-formyltetrahydrofolate = N-formyl-L-methionyl-tRNA(fMet) + (6S)-5,6,7,8-tetrahydrofolate + H(+). Its function is as follows. Attaches a formyl group to the free amino group of methionyl-tRNA(fMet). The formyl group appears to play a dual role in the initiator identity of N-formylmethionyl-tRNA by promoting its recognition by IF2 and preventing the misappropriation of this tRNA by the elongation apparatus. The protein is Methionyl-tRNA formyltransferase of Rhodopseudomonas palustris (strain HaA2).